A 362-amino-acid polypeptide reads, in one-letter code: Acetylajmalan esterase 2 (362 aa).

Positions 1-23 (MGFAARPFHIVFSLFVLAGATQA) are cleaved as a signal peptide. S38 acts as the Nucleophile in catalysis. N-linked (GlcNAc...) asparagine glycosylation is found at N100, N118, N151, and N202. Residues D335 and H338 contribute to the active site.

It belongs to the 'GDSL' lipolytic enzyme family. Confined to roots.

It catalyses the reaction 17-O-acetylnorajmaline + H2O = norajmaline + acetate + H(+). The catalysed reaction is 17-O-acetylajmaline + H2O = ajmaline + acetate + H(+). Its pathway is alkaloid biosynthesis; ajmaline biosynthesis. Functionally, acetylesterase involved in the biosynthesis of ajmaline-type monoterpenoid indole alkaloids (MIAs) natural products, important plant-derived pharmaceuticals used in the therapy of heart disorders. Deacetylates 17-O-acetylnorajmaline to produce norajmaline. May also catalyze the conversion of 17-O-acetylajmaline to ajmaline. This is Acetylajmalan esterase 2 from Rauvolfia serpentina (Serpentine wood).